Here is a 348-residue protein sequence, read N- to C-terminus: Bifunctional nitrilase/nitrile hydratase NIT4B (348 aa).

In terms of domain architecture, CN hydrolase spans 29-300; the sequence is VRATVVQAST…EALISADLDL (272 aa). Glu-69 functions as the Proton acceptor in the catalytic mechanism. The active-site Proton donor is Lys-156. Residue Cys-190 is the Nucleophile of the active site.

Belongs to the carbon-nitrogen hydrolase superfamily. Nitrilase family. As to expression, expressed in roots, stems, cotyledons, leaves and flowers.

The enzyme catalyses a nitrile + 2 H2O = a carboxylate + NH4(+). It catalyses the reaction 3-cyano-L-alanine + 2 H2O = L-aspartate + NH4(+). Its function is as follows. Highly specific for beta-cyano-L-alanine (Ala(CN)). Low activity with 3-phenylpropionitrile (PPN). Not associated with auxin production but may be involved in cyanide detoxification. The chain is Bifunctional nitrilase/nitrile hydratase NIT4B (NIT4B) from Nicotiana tabacum (Common tobacco).